The primary structure comprises 292 residues: Elongation factor Ts (292 aa).

The interval 79–82 is involved in Mg(2+) ion dislocation from EF-Tu; it reads TDFV.

It belongs to the EF-Ts family.

It is found in the cytoplasm. In terms of biological role, associates with the EF-Tu.GDP complex and induces the exchange of GDP to GTP. It remains bound to the aminoacyl-tRNA.EF-Tu.GTP complex up to the GTP hydrolysis stage on the ribosome. This chain is Elongation factor Ts, found in Malacoplasma penetrans (strain HF-2) (Mycoplasma penetrans).